Reading from the N-terminus, the 1190-residue chain is DNA-directed RNA polymerase subunit beta (1190 aa).

The disordered stretch occupies residues Glu1155–Glu1190. Positions Lys1173–Glu1190 are enriched in basic and acidic residues.

Belongs to the RNA polymerase beta chain family. The RNAP catalytic core consists of 2 alpha, 1 beta, 1 beta' and 1 omega subunit. When a sigma factor is associated with the core the holoenzyme is formed, which can initiate transcription.

It carries out the reaction RNA(n) + a ribonucleoside 5'-triphosphate = RNA(n+1) + diphosphate. In terms of biological role, DNA-dependent RNA polymerase catalyzes the transcription of DNA into RNA using the four ribonucleoside triphosphates as substrates. The protein is DNA-directed RNA polymerase subunit beta of Geobacillus kaustophilus (strain HTA426).